A 100-amino-acid polypeptide reads, in one-letter code: Urease subunit gamma (100 aa).

It belongs to the urease gamma subunit family. As to quaternary structure, heterotrimer of UreA (gamma), UreB (beta) and UreC (alpha) subunits. Three heterotrimers associate to form the active enzyme.

The protein resides in the cytoplasm. It carries out the reaction urea + 2 H2O + H(+) = hydrogencarbonate + 2 NH4(+). It participates in nitrogen metabolism; urea degradation; CO(2) and NH(3) from urea (urease route): step 1/1. This is Urease subunit gamma from Saccharopolyspora erythraea (strain ATCC 11635 / DSM 40517 / JCM 4748 / NBRC 13426 / NCIMB 8594 / NRRL 2338).